Here is a 117-residue protein sequence, read N- to C-terminus: Ribonuclease P protein component (117 aa).

This sequence belongs to the RnpA family. Consists of a catalytic RNA component (M1 or rnpB) and a protein subunit.

It carries out the reaction Endonucleolytic cleavage of RNA, removing 5'-extranucleotides from tRNA precursor.. Its function is as follows. RNaseP catalyzes the removal of the 5'-leader sequence from pre-tRNA to produce the mature 5'-terminus. It can also cleave other RNA substrates such as 4.5S RNA. The protein component plays an auxiliary but essential role in vivo by binding to the 5'-leader sequence and broadening the substrate specificity of the ribozyme. The polypeptide is Ribonuclease P protein component (Lactococcus lactis subsp. lactis (strain IL1403) (Streptococcus lactis)).